The sequence spans 117 residues: Ribosome-binding factor A (117 aa).

It belongs to the RbfA family. As to quaternary structure, monomer. Binds 30S ribosomal subunits, but not 50S ribosomal subunits or 70S ribosomes.

The protein resides in the cytoplasm. In terms of biological role, one of several proteins that assist in the late maturation steps of the functional core of the 30S ribosomal subunit. Associates with free 30S ribosomal subunits (but not with 30S subunits that are part of 70S ribosomes or polysomes). Required for efficient processing of 16S rRNA. May interact with the 5'-terminal helix region of 16S rRNA. The protein is Ribosome-binding factor A of Petrotoga mobilis (strain DSM 10674 / SJ95).